Reading from the N-terminus, the 388-residue chain is Staphopain A (388 aa).

Positions 1–25 are cleaved as a signal peptide; that stretch reads MKRNFPKLIALSLILSLSVTPIANA. The propeptide occupies 26–214; the sequence is ESNSNIKAKD…TSQFKSNNYT (189 aa). Catalysis depends on residues cysteine 238, histidine 334, and asparagine 355.

Belongs to the peptidase C47 family. In the cytoplasm, prematurely activated/folded ScpA forms a stable non-covalent complex with ScpB. In terms of processing, cleavage leads to the activation of ScpA probably by an auto-catalytic manner.

It localises to the secreted. It catalyses the reaction Broad endopeptidase action on proteins including elastin, but rather limited hydrolysis of small-molecule substrates. Assays are conveniently made with hemoglobin, casein or Z-Phe-Arg-NHMec as substrate.. Prematurely activated/folded staphopain A is inhibited by staphostatin A (ScpB), which is probably required to protect staphylococcal cytoplasmic proteins from degradation by ScpA. Functionally, cysteine protease that plays an important role in the inhibition of host innate immune response. Cleaves host elastins found in connective tissues, pulmonary surfactant protein A in the lungs, and the chemokine receptor CXCR2 on leukocytes. Proteolytic cleavage of surfactant protein A impairs bacterial phagocytosis by neutrophils while CXCR2 degradation blocks neutrophil activation and chemotaxis. Additionally, promotes vascular leakage by activating the plasma kallikerin/kinin system, resulting in hypotension. This chain is Staphopain A (sspP), found in Staphylococcus aureus (strain MSSA476).